The sequence spans 1323 residues: DNA-directed RNA polymerase subunit beta' (1323 aa).

Positions 60, 62, 75, and 78 each coordinate Zn(2+). Residues D535, D537, and D539 each contribute to the Mg(2+) site. C894, C977, C984, and C987 together coordinate Zn(2+).

This sequence belongs to the RNA polymerase beta' chain family. In terms of assembly, the RNAP catalytic core consists of 2 alpha, 1 beta, 1 beta' and 1 omega subunit. When a sigma factor is associated with the core the holoenzyme is formed, which can initiate transcription. Requires Mg(2+) as cofactor. It depends on Zn(2+) as a cofactor.

The enzyme catalyses RNA(n) + a ribonucleoside 5'-triphosphate = RNA(n+1) + diphosphate. Functionally, DNA-dependent RNA polymerase catalyzes the transcription of DNA into RNA using the four ribonucleoside triphosphates as substrates. This is DNA-directed RNA polymerase subunit beta' from Corynebacterium jeikeium (strain K411).